The sequence spans 102 residues: Colipase-like protein 2 (102 aa).

The signal sequence occupies residues 1 to 23; the sequence is MAFTQALVTVLALLAGTLPHRHS. 5 disulfides stabilise this stretch: C36-C47, C42-C58, C46-C80, C68-C88, and C82-C99.

The protein belongs to the colipase family.

It is found in the secreted. The polypeptide is Colipase-like protein 2 (Clpsl2) (Mus musculus (Mouse)).